Consider the following 161-residue polypeptide: Nucleotide-binding protein Bcep1808_2648 (161 aa).

This sequence belongs to the YajQ family.

In terms of biological role, nucleotide-binding protein. This chain is Nucleotide-binding protein Bcep1808_2648, found in Burkholderia vietnamiensis (strain G4 / LMG 22486) (Burkholderia cepacia (strain R1808)).